The following is a 535-amino-acid chain: Cytochrome c oxidase subunit 1 (535 aa).

A helical transmembrane segment spans residues 15-37 (IAILYFIFSTFCGLAGTAMSFII). Residues Glu-40, Ala-43, and Gly-45 each contribute to the Ca(2+) site. A run of 5 helical transmembrane segments spans residues 58 to 80 (VLVT…IGGF), 147 to 169 (LAIF…FIVT), 190 to 212 (ILIT…TMLL), 238 to 260 (WFFG…SHIV), and 267 to 289 (PVFG…FLVW). Fe(II)-heme a is bound at residue His-63. His-242 is a Cu cation binding site. Positions 242 to 246 (HPEVY) form a cross-link, 1'-histidyl-3'-tyrosine (His-Tyr). Tyr-246 contacts O2. Residues His-291 and His-292 each coordinate Cu cation. The next 2 membrane-spanning stretches (helical) occupy residues 304–326 (AYFT…SWLT) and 339–361 (MLYT…VLAN). The Mg(2+) site is built by His-369 and Asp-370. 2 consecutive transmembrane segments (helical) span residues 376-398 (THFH…YYWS) and 415-437 (FWLI…INGM). Residue His-377 participates in heme a3 binding. Residue His-379 coordinates Fe(II)-heme a. Pro-442 contributes to the Ca(2+) binding site. The helical transmembrane segment at 452 to 474 (NLVSSFGSMMTIMSLMLFTYIIY) threads the bilayer.

It belongs to the heme-copper respiratory oxidase family. Component of the cytochrome c oxidase (complex IV, CIV), a multisubunit enzyme composed of a catalytic core of 3 subunits and several supernumerary subunits. The complex exists as a monomer or a dimer and forms supercomplexes (SCs) in the inner mitochondrial membrane with ubiquinol-cytochrome c oxidoreductase (cytochrome b-c1 complex, complex III, CIII). Requires heme as cofactor. The cofactor is Cu cation.

Its subcellular location is the mitochondrion inner membrane. The catalysed reaction is 4 Fe(II)-[cytochrome c] + O2 + 8 H(+)(in) = 4 Fe(III)-[cytochrome c] + 2 H2O + 4 H(+)(out). It participates in energy metabolism; oxidative phosphorylation. In terms of biological role, component of the cytochrome c oxidase, the last enzyme in the mitochondrial electron transport chain which drives oxidative phosphorylation. The respiratory chain contains 3 multisubunit complexes succinate dehydrogenase (complex II, CII), ubiquinol-cytochrome c oxidoreductase (cytochrome b-c1 complex, complex III, CIII) and cytochrome c oxidase (complex IV, CIV), that cooperate to transfer electrons derived from NADH and succinate to molecular oxygen, creating an electrochemical gradient over the inner membrane that drives transmembrane transport and the ATP synthase. Cytochrome c oxidase is the component of the respiratory chain that catalyzes the reduction of oxygen to water. Electrons originating from reduced cytochrome c in the intermembrane space (IMS) are transferred via the dinuclear copper A center (CU(A)) of subunit 2 and heme A of subunit 1 to the active site in subunit 1, a binuclear center (BNC) formed by heme A3 and copper B (CU(B)). The BNC reduces molecular oxygen to 2 water molecules using 4 electrons from cytochrome c in the IMS and 4 protons from the mitochondrial matrix. This Eremothecium gossypii (strain ATCC 10895 / CBS 109.51 / FGSC 9923 / NRRL Y-1056) (Yeast) protein is Cytochrome c oxidase subunit 1 (COX1).